The following is a 233-amino-acid chain: Preflagellin peptidase (233 aa).

A topological domain (cytoplasmic) is located at residue methionine 1. A helical membrane pass occupies residues 2–18 (IAYAIGLLGLLIASIQD). Topologically, residues 19 to 23 (IKSRE) are extracellular. A helical membrane pass occupies residues 24–46 (IENYIWIGMAVIGLLLSTYLSFT). At 47–49 (TGN) the chain is on the cytoplasmic side. A helical transmembrane segment spans residues 50–72 (FMPIISSISGFIICFIIGYLMFV). At 73–78 (LGIGGA) the chain is on the extracellular side. The chain crosses the membrane as a helical span at residues 79-89 (DGKILMGMGAL). Residues 90 to 110 (IPSYAFPVYSSLQPLYTMEYI) are Cytoplasmic-facing. Residues 111–139 (PWFPLLVFFNGVILMIVLPIYLFFKNLSN) traverse the membrane as a helical segment. Over 140–207 (GVKPKKLKEY…QYVWATPELP (68 aa)) the chain is Extracellular. Residues 208-219 (LLVPIALSYIIT) traverse the membrane as a helical segment. Topologically, residues 220–233 (PFLGDKILSIILPM) are cytoplasmic.

Belongs to the peptidase A24 family. Archaeal preflagellin peptidase subfamily.

The protein localises to the cell membrane. It catalyses the reaction Cleaves the signal peptide of 3 to 12 amino acids from the N-terminal of preflagellin, usually at Arg-Gly-|- or Lys-Gly-|-, to release flagellin.. Its function is as follows. Cleaves the N-terminal leader peptide from preflagellins. The processing of preflagellins is necessary for assembly of flagellins into a flagellum structure. The polypeptide is Preflagellin peptidase (flaK) (Methanococcus voltae).